Consider the following 536-residue polypeptide: Apolipoprotein N-acyltransferase (536 aa).

The next 7 helical transmembrane spans lie at 10–30 (IASG…LLAG), 42–62 (AWPV…GSAA), 76–96 (WWFG…AFLV), 107–127 (AAIC…FALA), 136–158 (LRIL…LLTG), 181–201 (IGIW…AVLI), and 212–232 (AVPA…GIRL). The CN hydrolase domain maps to 248 to 501 (MQPNLPQDAR…EGVLDSGLPA (254 aa)). Residue glutamate 295 is the Proton acceptor of the active site. The active site involves lysine 360. Cysteine 413 (nucleophile) is an active-site residue. Residues 509 to 529 (ARVGELPAAVLVALVMMLVLL) form a helical membrane-spanning segment.

The protein belongs to the CN hydrolase family. Apolipoprotein N-acyltransferase subfamily.

Its subcellular location is the cell inner membrane. It carries out the reaction N-terminal S-1,2-diacyl-sn-glyceryl-L-cysteinyl-[lipoprotein] + a glycerophospholipid = N-acyl-S-1,2-diacyl-sn-glyceryl-L-cysteinyl-[lipoprotein] + a 2-acyl-sn-glycero-3-phospholipid + H(+). Its pathway is protein modification; lipoprotein biosynthesis (N-acyl transfer). Functionally, catalyzes the phospholipid dependent N-acylation of the N-terminal cysteine of apolipoprotein, the last step in lipoprotein maturation. This chain is Apolipoprotein N-acyltransferase, found in Rhodopseudomonas palustris (strain ATCC BAA-98 / CGA009).